We begin with the raw amino-acid sequence, 256 residues long: uncharacterized protein (256 aa).

The region spanning 10–64 is the HTH cro/C1-type domain; the sequence is IRALRESRDWSLADLAAATGVSTMGLSYLERGARKPHKSTVQKVENGLGLPPGTY. Residues 21-40 constitute a DNA-binding region (H-T-H motif); it reads LADLAAATGVSTMGLSYLER.

This is an uncharacterized protein from Mycobacterium bovis (strain ATCC BAA-935 / AF2122/97).